We begin with the raw amino-acid sequence, 404 residues long: Glucose-1-phosphate adenylyltransferase (404 aa).

Residues Tyr99, Gly164, 179–180, and Ser197 contribute to the alpha-D-glucose 1-phosphate site; that span reads EK.

It belongs to the bacterial/plant glucose-1-phosphate adenylyltransferase family.

It catalyses the reaction alpha-D-glucose 1-phosphate + ATP + H(+) = ADP-alpha-D-glucose + diphosphate. Its pathway is glycan biosynthesis; glycogen biosynthesis. Functionally, involved in the biosynthesis of ADP-glucose, a building block, required in the biosynthesis of maltose-1-phosphate (M1P) and in the elongation reactions to produce linear alpha-1,4-glucans. Catalyzes the reaction between ATP and alpha-D-glucose 1-phosphate (G1P) to produce pyrophosphate and ADP-Glc. The polypeptide is Glucose-1-phosphate adenylyltransferase (Mycolicibacterium vanbaalenii (strain DSM 7251 / JCM 13017 / BCRC 16820 / KCTC 9966 / NRRL B-24157 / PYR-1) (Mycobacterium vanbaalenii)).